The chain runs to 725 residues: Antigen peptide transporter 1 (725 aa).

Over 1 to 8 (MAAHAWPT) the chain is Cytoplasmic. A helical membrane pass occupies residues 9–29 (AALLLLLVDWLLLRPVLPGIF). The Lumenal portion of the chain corresponds to 30 to 38 (SLLVPEVPL). A helical membrane pass occupies residues 39–60 (LRVWAVGLSRWAILGLGVRGVL). The Cytoplasmic portion of the chain corresponds to 61-67 (GVTAGAR). A helical membrane pass occupies residues 68–88 (GWLAALQPLVAALGLALPGLA). Topologically, residues 89–110 (SFRKLSAWGALREGDNAGLLHW) are lumenal. A helical transmembrane segment spans residues 111 to 131 (NSRLDAFVLSYVAALPAAALW). Residues 132–163 (HKLGGFWAPSGHKGAGDMLCRMLGFLDSKKGR) lie on the Cytoplasmic side of the membrane. The helical transmembrane segment at 164-184 (LHLVLVLLILSCLGEMAIPFF) threads the bilayer. Residues 164–447 (LHLVLVLLIL…LLSIYPSMQK (284 aa)) enclose the ABC transmembrane type-1 domain. The Lumenal segment spans residues 185–204 (TGRITDWILQDKTAPSFARN). A helical membrane pass occupies residues 205–225 (MWLMCILTIASTVLEFAGDGI). At 226 to 275 (YNITMGHMHSRVHGEVFRAVLHQETGFFLKNPTGSITSRVTEDTSNVCES) the chain is on the cytoplasmic side. A helical membrane pass occupies residues 276–296 (ISDKLNLFLWYLGRGLCLLAF). Residues 297-305 (MIWGSFYLT) are Lumenal-facing. A helical transmembrane segment spans residues 306 to 326 (VVTLLSLPLLFLLPRRLGKVY). Residues 327–395 (QSLAVKVQES…VTEVWTMSVS (69 aa)) lie on the Cytoplasmic side of the membrane. The interval 352 to 397 (PTVRSFANEEGEAQKFRQKLEEMKPLNKKEALAYVTEVWTMSVSGM) is part of the peptide-binding site. Residues 396–416 (GMLLKVGILYLGGQLVVRGAV) form a helical membrane-spanning segment. At 417 to 420 (SSGN) the chain is on the lumenal side. A helical membrane pass occupies residues 421–441 (LVSFVLYQLQFTRAVEVLLSI). The part of the peptide-binding site stretch occupies residues 430 to 464 (QFTRAVEVLLSIYPSMQKSVGASEKIFEYLDRTPC). At 442-725 (YPSMQKSVGA…MVEALAAPSD (284 aa)) the chain is on the cytoplasmic side. Residues 480 to 719 (VKFQDVSFAY…GGCYRSMVEA (240 aa)) enclose the ABC transporter domain. ATP is bound by residues 515 to 523 (GPNGSGKST), 618 to 624 (NQLSGGQ), and Gln678. Ser522 is a Mg(2+) binding site.

The protein belongs to the ABC transporter superfamily. ABCB family. MHC peptide exporter (TC 3.A.1.209) subfamily. Heterodimer of TAP1 and TAP2 (TAP1-TAP2). A component of the peptide loading complex (PLC), interacts via TAPBP with MHCI heterodimer; this interaction mediates peptide-MHCI assembly. Interacts with PSMB5 and PSMB8. It depends on Mg(2+) as a cofactor.

The protein localises to the endoplasmic reticulum membrane. It catalyses the reaction a peptide antigen(in) + ATP + H2O = a peptide antigen(out) + ADP + phosphate + H(+). ABC transporter associated with antigen processing. In complex with TAP2 mediates unidirectional translocation of peptide antigens from cytosol to endoplasmic reticulum (ER) for loading onto MHC class I (MHCI) molecules. Uses the chemical energy of ATP to export peptides against the concentration gradient. During the transport cycle alternates between 'inward-facing' state with peptide binding site facing the cytosol to 'outward-facing' state with peptide binding site facing the ER lumen. Peptide antigen binding to ATP-loaded TAP1-TAP2 induces a switch to hydrolysis-competent 'outward-facing' conformation ready for peptide loading onto nascent MHCI molecules. Subsequently ATP hydrolysis resets the transporter to the 'inward facing' state for a new cycle. As a component of the peptide loading complex (PLC), acts as a molecular scaffold essential for peptide-MHCI assembly and antigen presentation. The protein is Antigen peptide transporter 1 (Tap1) of Rattus norvegicus (Rat).